Consider the following 156-residue polypeptide: Ribosomal RNA large subunit methyltransferase H (156 aa).

Residues Leu-73, Gly-104, and 123-128 contribute to the S-adenosyl-L-methionine site; that span reads LSSLTL.

This sequence belongs to the RNA methyltransferase RlmH family. As to quaternary structure, homodimer.

It localises to the cytoplasm. The catalysed reaction is pseudouridine(1915) in 23S rRNA + S-adenosyl-L-methionine = N(3)-methylpseudouridine(1915) in 23S rRNA + S-adenosyl-L-homocysteine + H(+). Specifically methylates the pseudouridine at position 1915 (m3Psi1915) in 23S rRNA. In Ralstonia nicotianae (strain ATCC BAA-1114 / GMI1000) (Ralstonia solanacearum), this protein is Ribosomal RNA large subunit methyltransferase H.